A 131-amino-acid chain; its full sequence is Small ribosomal subunit protein uS11 (131 aa).

Belongs to the universal ribosomal protein uS11 family. Part of the 30S ribosomal subunit. Interacts with proteins S7 and S18. Binds to IF-3.

In terms of biological role, located on the platform of the 30S subunit, it bridges several disparate RNA helices of the 16S rRNA. Forms part of the Shine-Dalgarno cleft in the 70S ribosome. The sequence is that of Small ribosomal subunit protein uS11 from Helicobacter pylori (strain Shi470).